The chain runs to 190 residues: Putative triphosphatase YjbK (190 aa).

Residues 4 to 189 (EIEIEFKNML…LRFYEEKRKS (186 aa)) form the CYTH domain.

The protein is Putative triphosphatase YjbK (yjbK) of Bacillus subtilis (strain 168).